The primary structure comprises 485 residues: NADH-quinone oxidoreductase subunit N (485 aa).

14 consecutive transmembrane segments (helical) span residues 8-28 (LIALLPLLIVGLTVVVVMLSI), 35-55 (FLNATLSVIGLNAALVSLWFV), 71-91 (GFAMLYTGLVLLASLATCTFA), 105-125 (FYLLVLIAALGGILLANANHL), 127-147 (SLFLGIELISLPLFGLVGYAF), 159-179 (YTILSAAASSFLLFGMALVYA), 203-223 (LLAGFGLMIVGLGFKLSLVPF), 235-255 (PAPVSTFLATASKIAIFGVVM), 271-291 (VVLAIIAFASIIFGNLMALSQ), 297-317 (LLGYSSISHLGYLLVALIALQ), 326-346 (VGVYLAGYLFSSLGAFGVVSL), 373-393 (AAVMTVMMLSLAGIPMTLGFI), 408-430 (WWLVGAVVVGSAIGLYYYLRVAV), and 455-475 (IVVLISALLVLVLGVWPQPLI).

Belongs to the complex I subunit 2 family. NDH-1 is composed of 13 different subunits. Subunits NuoA, H, J, K, L, M, N constitute the membrane sector of the complex.

It is found in the cell inner membrane. The catalysed reaction is a quinone + NADH + 5 H(+)(in) = a quinol + NAD(+) + 4 H(+)(out). Functionally, NDH-1 shuttles electrons from NADH, via FMN and iron-sulfur (Fe-S) centers, to quinones in the respiratory chain. The immediate electron acceptor for the enzyme in this species is believed to be ubiquinone. Couples the redox reaction to proton translocation (for every two electrons transferred, four hydrogen ions are translocated across the cytoplasmic membrane), and thus conserves the redox energy in a proton gradient. This Escherichia coli O139:H28 (strain E24377A / ETEC) protein is NADH-quinone oxidoreductase subunit N.